A 400-amino-acid chain; its full sequence is Large envelope protein (400 aa).

Met-1 is subject to N-acetylmethionine. The N-myristoyl glycine; by host moiety is linked to residue Gly-2. A pre-S1 region spans residues 2-119 (GAPLSTTRRG…PPLRDTHPQA (118 aa)). Positions 2–174 (GAPLSTTRRG…FLKTGGPATN (173 aa)) are pre-S. Residues 2–181 (GAPLSTTRRG…ATNMDNITSG (180 aa)) are Virion surface; in external conformation-facing. Topologically, residues 2–253 (GAPLSTTRRG…PGYRWMCLRR (252 aa)) are intravirion; in internal conformation. N-linked (GlcNAc...) asparagine glycosylation is present at Pro-4. Residues 84 to 114 (VLTTLPADPPPASTNRRSGRKPTPVSPPLRD) are disordered. The pre-S2 stretch occupies residues 120–174 (MQWNSTQFHQALLDPRVRALYFPAGGSSSETQNPAPTIASLTSSIFLKTGGPATN). A helical transmembrane segment spans residues 182–202 (LLGPLLVLQAVCFLLTKILTI). The Intravirion; in external conformation portion of the chain corresponds to 203 to 253 (PQSLDSWWTSLNFLGGTPGCPGQNSQSPTSNHLPTSCPPTCPGYRWMCLRR). The chain crosses the membrane as a helical span at residues 254–274 (FIIFLFILLLCLIFLLVLVDY). Topologically, residues 275 to 348 (QGMLPVCPPL…WASARFSWLS (74 aa)) are virion surface. The N-linked (GlcNAc...) asparagine; by host glycan is linked to Asn-320. A helical transmembrane segment spans residues 349–369 (LLVQFVQWCVGLSPTVWLLVI). At 370-375 (WMIWYW) the chain is on the intravirion side. Residues 376–398 (GPNLCSILSPFIPLLPIFCYLWV) traverse the membrane as a helical segment. Residues 399-400 (SI) are Virion surface-facing.

The protein belongs to the orthohepadnavirus major surface antigen family. As to quaternary structure, in its internal form (Li-HBsAg), interacts with the capsid protein and with the isoform S. Interacts with host chaperone CANX. In terms of assembly, associates with host chaperone CANX through its pre-S2 N glycan; this association may be essential for isoform M proper secretion. Interacts with isoform L. Interacts with the antigens of satellite virus HDV (HDVAgs); this interaction is required for encapsidation of HDV genomic RNA. In terms of processing, isoform M is N-terminally acetylated by host at a ratio of 90%, and N-glycosylated by host at the pre-S2 region. Post-translationally, myristoylated.

Its subcellular location is the virion membrane. Functionally, the large envelope protein exists in two topological conformations, one which is termed 'external' or Le-HBsAg and the other 'internal' or Li-HBsAg. In its external conformation the protein attaches the virus to cell receptors and thereby initiating infection. This interaction determines the species specificity and liver tropism. This attachment induces virion internalization predominantly through caveolin-mediated endocytosis. The large envelope protein also assures fusion between virion membrane and endosomal membrane. In its internal conformation the protein plays a role in virion morphogenesis and mediates the contact with the nucleocapsid like a matrix protein. Its function is as follows. The middle envelope protein plays an important role in the budding of the virion. It is involved in the induction of budding in a nucleocapsid independent way. In this process the majority of envelope proteins bud to form subviral lipoprotein particles of 22 nm of diameter that do not contain a nucleocapsid. The sequence is that of Large envelope protein from Homo sapiens (Human).